The following is a 209-amino-acid chain: Uracil phosphoribosyltransferase (209 aa).

Residues arginine 79, arginine 104, and 131-139 (DPMLATGGS) contribute to the 5-phospho-alpha-D-ribose 1-diphosphate site. Uracil contacts are provided by residues isoleucine 194 and 199–201 (GDA). Aspartate 200 provides a ligand contact to 5-phospho-alpha-D-ribose 1-diphosphate.

Belongs to the UPRTase family. Requires Mg(2+) as cofactor.

The enzyme catalyses UMP + diphosphate = 5-phospho-alpha-D-ribose 1-diphosphate + uracil. The protein operates within pyrimidine metabolism; UMP biosynthesis via salvage pathway; UMP from uracil: step 1/1. Allosterically activated by GTP. Catalyzes the conversion of uracil and 5-phospho-alpha-D-ribose 1-diphosphate (PRPP) to UMP and diphosphate. The sequence is that of Uracil phosphoribosyltransferase from Agathobacter rectalis (strain ATCC 33656 / DSM 3377 / JCM 17463 / KCTC 5835 / VPI 0990) (Eubacterium rectale).